The primary structure comprises 313 residues: tRNA dimethylallyltransferase (313 aa).

Residue 10–17 (GPTAVGKS) participates in ATP binding. 12–17 (TAVGKS) serves as a coordination point for substrate. The interval 35–38 (DSTQ) is interaction with substrate tRNA.

The protein belongs to the IPP transferase family. As to quaternary structure, monomer. Mg(2+) is required as a cofactor.

The catalysed reaction is adenosine(37) in tRNA + dimethylallyl diphosphate = N(6)-dimethylallyladenosine(37) in tRNA + diphosphate. Catalyzes the transfer of a dimethylallyl group onto the adenine at position 37 in tRNAs that read codons beginning with uridine, leading to the formation of N6-(dimethylallyl)adenosine (i(6)A). The protein is tRNA dimethylallyltransferase of Oceanobacillus iheyensis (strain DSM 14371 / CIP 107618 / JCM 11309 / KCTC 3954 / HTE831).